Consider the following 440-residue polypeptide: COP9 signalosome complex subunit 5 (440 aa).

The MPN domain maps to 71-218; it reads VLISKLSCEK…MGAFRTIESK (148 aa). 3 residues coordinate Zn(2+): His-164, His-166, and Asp-177. Residues 164–177 carry the JAMM motif motif; it reads HSHPGYDCWLSNID. A compositionally biased stretch (polar residues) spans 319 to 341; sequence TQRGDSTETSSFGSMFSGDNTSD. Disordered regions lie at residues 319–343 and 375–399; these read TQRG…SDVD and SSRS…CHDE.

Belongs to the peptidase M67A family. CSN5 subfamily. Component of a COP9 signalosome-like (CSN) complex, composed of at least RRI1/CSN5, CSN9, RRI2/CSN10, PCI8/CSN11, CSN12 and CSI1. Within this complex it probably interacts directly with CSN12. Also interacts with RPN5. A divalent metal cation is required as a cofactor.

It is found in the cytoplasm. It localises to the nucleus. In terms of biological role, catalytic component of the COP9 signalosome (CSN) complex that acts as an regulator of the ubiquitin (Ubl) conjugation pathway by mediating the deneddylation of the cullin subunit of SCF-type E3 ubiquitin-protein ligase complexes. The CSN complex is involved in the regulation of the mating pheromone response. This chain is COP9 signalosome complex subunit 5 (RRI1), found in Saccharomyces cerevisiae (strain ATCC 204508 / S288c) (Baker's yeast).